The following is a 533-amino-acid chain: NAD(P)H-quinone oxidoreductase chain 4 (533 aa).

Helical transmembrane passes span 5 to 25 (VPWL…VPLV), 36 to 56 (WYAL…YLTG), 70 to 90 (VSWL…LSMP), 91 to 111 (LILL…PVSF), 115 to 135 (LFYF…AVQD), 137 to 157 (LLFF…LAIW), 169 to 189 (FILY…AMGF), 210 to 230 (GFQL…LPIV), 244 to 264 (TAPV…YALL), 278 to 298 (FAPL…LTSF), 315 to 335 (MGFV…GAML), 336 to 356 (QMIS…ATYD), 377 to 397 (FALW…SGFV), 418 to 438 (VVIC…LLSM), and 465 to 485 (VYII…PKLM).

The protein belongs to the complex I subunit 4 family.

The protein localises to the cellular thylakoid membrane. It catalyses the reaction a plastoquinone + NADH + (n+1) H(+)(in) = a plastoquinol + NAD(+) + n H(+)(out). It carries out the reaction a plastoquinone + NADPH + (n+1) H(+)(in) = a plastoquinol + NADP(+) + n H(+)(out). In terms of biological role, NDH-1 shuttles electrons from NAD(P)H, via FMN and iron-sulfur (Fe-S) centers, to quinones in the respiratory chain. The immediate electron acceptor for the enzyme in this species is believed to be plastoquinone. Couples the redox reaction to proton translocation (for every two electrons transferred, four hydrogen ions are translocated across the cytoplasmic membrane), and thus conserves the redox energy in a proton gradient. This is NAD(P)H-quinone oxidoreductase chain 4 from Synechococcus sp. (strain CC9605).